The following is a 1051-amino-acid chain: Inactive tyrosine-protein kinase 7 (1051 aa).

Residues 1–22 form the signal peptide; sequence MAALRALLLLLAVGAQAAIRFA. 7 Ig-like C2-type domains span residues 23–105, 115–204, 213–298, 308–388, 393–472, 487–566, and 573–661; these read KEPY…ANAS, SVVL…DNFT, PQAV…KATL, PFSP…LSIT, PKWV…GSIE, PPPQ…ATVQ, and VTFK…AFLY. Residues 23-685 lie on the Extracellular side of the membrane; sequence KEPYSQDALH…SHTPYKMIQT (663 aa). A disulfide bond links Cys-40 and Cys-88. Asn-103 is a glycosylation site (N-linked (GlcNAc...) asparagine). Cys-137 and Cys-187 form a disulfide bridge. Residues Asn-202, Asn-255, and Asn-264 are each glycosylated (N-linked (GlcNAc...) asparagine). 5 disulfide bridges follow: Cys-234–Cys-282, Cys-326–Cys-372, Cys-414–Cys-462, Cys-505–Cys-551, and Cys-594–Cys-645. Residues Asn-444, Asn-548, and Asn-627 are each glycosylated (N-linked (GlcNAc...) asparagine). A helical transmembrane segment spans residues 686–706; sequence IGLSVGAAVAYIIIVLGLMFY. Residues 707–1051 are Cytoplasmic-facing; it reads CKKRRKAKRL…LGDSPADSKA (345 aa). Residues 777 to 1048 enclose the Protein kinase; inactive domain; the sequence is LQTITTLGRG…AAALGDSPAD (272 aa).

It belongs to the protein kinase superfamily. Tyr protein kinase family. Insulin receptor subfamily. Expressed in bone marrow, spleen, bursa, thymus and brain. Weakly expressed in fibroblasts. Also expressed in embryonic liver.

It is found in the membrane. Inactive tyrosine kinase involved in Wnt signaling. pathway. In Gallus gallus (Chicken), this protein is Inactive tyrosine-protein kinase 7 (PTK7).